The primary structure comprises 340 residues: Ferrochelatase (340 aa).

Residues histidine 189 and glutamate 292 each coordinate Fe cation.

This sequence belongs to the ferrochelatase family.

It is found in the cytoplasm. The catalysed reaction is heme b + 2 H(+) = protoporphyrin IX + Fe(2+). Its pathway is porphyrin-containing compound metabolism; protoheme biosynthesis; protoheme from protoporphyrin-IX: step 1/1. In terms of biological role, catalyzes the ferrous insertion into protoporphyrin IX. The polypeptide is Ferrochelatase (Pseudomonas aeruginosa (strain LESB58)).